Here is a 192-residue protein sequence, read N- to C-terminus: dITP/XTP pyrophosphatase (192 aa).

12–17 (TNNENK) contributes to the substrate binding site. Glu-41 and Asp-70 together coordinate Mg(2+). Asp-70 (proton acceptor) is an active-site residue. Substrate is bound by residues Ser-71, 145–148 (FGFD), Lys-168, and 173–174 (HR).

It belongs to the HAM1 NTPase family. In terms of assembly, homodimer. The cofactor is Mg(2+).

It carries out the reaction XTP + H2O = XMP + diphosphate + H(+). The catalysed reaction is dITP + H2O = dIMP + diphosphate + H(+). The enzyme catalyses ITP + H2O = IMP + diphosphate + H(+). In terms of biological role, pyrophosphatase that catalyzes the hydrolysis of nucleoside triphosphates to their monophosphate derivatives, with a high preference for the non-canonical purine nucleotides XTP (xanthosine triphosphate), dITP (deoxyinosine triphosphate) and ITP. Seems to function as a house-cleaning enzyme that removes non-canonical purine nucleotides from the nucleotide pool, thus preventing their incorporation into DNA/RNA and avoiding chromosomal lesions. The polypeptide is dITP/XTP pyrophosphatase (Saccharolobus solfataricus (strain ATCC 35092 / DSM 1617 / JCM 11322 / P2) (Sulfolobus solfataricus)).